Here is a 339-residue protein sequence, read N- to C-terminus: Ribosomal RNA small subunit methyltransferase H (339 aa).

S-adenosyl-L-methionine-binding positions include 40–42, Asp-58, Phe-85, Asp-106, and Gln-113; that span reads GGY.

Belongs to the methyltransferase superfamily. RsmH family.

It is found in the cytoplasm. The catalysed reaction is cytidine(1402) in 16S rRNA + S-adenosyl-L-methionine = N(4)-methylcytidine(1402) in 16S rRNA + S-adenosyl-L-homocysteine + H(+). Functionally, specifically methylates the N4 position of cytidine in position 1402 (C1402) of 16S rRNA. This chain is Ribosomal RNA small subunit methyltransferase H, found in Parvibaculum lavamentivorans (strain DS-1 / DSM 13023 / NCIMB 13966).